A 430-amino-acid polypeptide reads, in one-letter code: tRNA(Ile)-lysidine synthase (430 aa).

Residue 21-26 (SGGLDS) participates in ATP binding.

Belongs to the tRNA(Ile)-lysidine synthase family.

The protein resides in the cytoplasm. It carries out the reaction cytidine(34) in tRNA(Ile2) + L-lysine + ATP = lysidine(34) in tRNA(Ile2) + AMP + diphosphate + H(+). In terms of biological role, ligates lysine onto the cytidine present at position 34 of the AUA codon-specific tRNA(Ile) that contains the anticodon CAU, in an ATP-dependent manner. Cytidine is converted to lysidine, thus changing the amino acid specificity of the tRNA from methionine to isoleucine. The chain is tRNA(Ile)-lysidine synthase from Salmonella typhi.